An 85-amino-acid polypeptide reads, in one-letter code: Homeobox protein knotted-1-like 8 (85 aa).

The ELK domain maps to 1 to 21; it reads ELKHQLLRKYGGYLGGLRQEF. Positions 22-85 form a DNA-binding region, homeobox; TALE-type; it reads SKRKKKGKLP…NQRKRHWKPA (64 aa).

Belongs to the TALE/KNOX homeobox family. In terms of tissue distribution, strongly expressed in ear inflorescence primordia and shoot meristem. Weakly expressed in embryos. Absent from leaves.

It localises to the nucleus. Functionally, probably binds to the DNA sequence 5'-TGAC-3'. The chain is Homeobox protein knotted-1-like 8 (KNOX8) from Zea mays (Maize).